Reading from the N-terminus, the 174-residue chain is CDP-archaeol synthase (174 aa).

Transmembrane regions (helical) follow at residues 51 to 71, 74 to 94, 112 to 132, and 136 to 156; these read LIGL…AGFI, SLLV…ALLG, MLPI…TFLL, and WLLA…IPVF.

The protein belongs to the CDP-archaeol synthase family. It depends on Mg(2+) as a cofactor.

The protein localises to the cell membrane. It catalyses the reaction 2,3-bis-O-(geranylgeranyl)-sn-glycerol 1-phosphate + CTP + H(+) = CDP-2,3-bis-O-(geranylgeranyl)-sn-glycerol + diphosphate. The protein operates within membrane lipid metabolism; glycerophospholipid metabolism. Its function is as follows. Catalyzes the formation of CDP-2,3-bis-(O-geranylgeranyl)-sn-glycerol (CDP-archaeol) from 2,3-bis-(O-geranylgeranyl)-sn-glycerol 1-phosphate (DGGGP) and CTP. This reaction is the third ether-bond-formation step in the biosynthesis of archaeal membrane lipids. In Methanocella arvoryzae (strain DSM 22066 / NBRC 105507 / MRE50), this protein is CDP-archaeol synthase.